Here is a 490-residue protein sequence, read N- to C-terminus: Probable glycine dehydrogenase (decarboxylating) subunit 2 (490 aa).

Residue K273 is modified to N6-(pyridoxal phosphate)lysine.

The protein belongs to the GcvP family. C-terminal subunit subfamily. The glycine cleavage system is composed of four proteins: P, T, L and H. In this organism, the P 'protein' is a heterodimer of two subunits. It depends on pyridoxal 5'-phosphate as a cofactor.

The enzyme catalyses N(6)-[(R)-lipoyl]-L-lysyl-[glycine-cleavage complex H protein] + glycine + H(+) = N(6)-[(R)-S(8)-aminomethyldihydrolipoyl]-L-lysyl-[glycine-cleavage complex H protein] + CO2. In terms of biological role, the glycine cleavage system catalyzes the degradation of glycine. The P protein binds the alpha-amino group of glycine through its pyridoxal phosphate cofactor; CO(2) is released and the remaining methylamine moiety is then transferred to the lipoamide cofactor of the H protein. This Staphylococcus aureus (strain MSSA476) protein is Probable glycine dehydrogenase (decarboxylating) subunit 2.